We begin with the raw amino-acid sequence, 449 residues long: MIKIRKGLDLPIAGAPAQAIQDGPIIQHVALLGEDYVGMRPSMLVQEGESVKKGQALFEDKKTPGVFFTAPASGRILSINRGERRVLQSVVIAVENGGDEQLEFAHYPVAELAMLPREQVESELLASGLWTALRTRPFSKTPAPGSTPRAIFVTAMDSQPLAADPQVIIAEQLAAFNAGLAVLARLTDGKVHVCHAAGANLGKQPDAQVTYNEFAGPHPAGLVGTHIHFLEPVSLKKTVWHIGYQDAIAIGTLFTTGKLDTRRVVALAGPQVEQPVLLRTRLGASIDELTAGRLKAGENRVISGSVLSGTHVAGPNAYLGRFHSLVSVLQEGRDKELFGWIAPSPDKFSITRTTLGHFLKNKLFAFSTTTHGGERAMVPIGNYERVMPLDILPTLLLRDLLAGDSDSAQALGCLELDEEDLALCTFVCPGKYEYAPVLRDVLTKIEQEG.

The protein belongs to the NqrA family. As to quaternary structure, composed of six subunits; NqrA, NqrB, NqrC, NqrD, NqrE and NqrF.

The catalysed reaction is a ubiquinone + n Na(+)(in) + NADH + H(+) = a ubiquinol + n Na(+)(out) + NAD(+). In terms of biological role, NQR complex catalyzes the reduction of ubiquinone-1 to ubiquinol by two successive reactions, coupled with the transport of Na(+) ions from the cytoplasm to the periplasm. NqrA to NqrE are probably involved in the second step, the conversion of ubisemiquinone to ubiquinol. The chain is Na(+)-translocating NADH-quinone reductase subunit A from Serratia proteamaculans (strain 568).